Consider the following 308-residue polypeptide: Ribonuclease Z (308 aa).

Residues His-61, His-63, Asp-65, His-66, His-139, Asp-210, and His-268 each contribute to the Zn(2+) site. Asp-65 (proton acceptor) is an active-site residue.

The protein belongs to the RNase Z family. Homodimer. Zn(2+) serves as cofactor.

It catalyses the reaction Endonucleolytic cleavage of RNA, removing extra 3' nucleotides from tRNA precursor, generating 3' termini of tRNAs. A 3'-hydroxy group is left at the tRNA terminus and a 5'-phosphoryl group is left at the trailer molecule.. Functionally, zinc phosphodiesterase, which displays some tRNA 3'-processing endonuclease activity. Probably involved in tRNA maturation, by removing a 3'-trailer from precursor tRNA. The protein is Ribonuclease Z of Halobacterium salinarum (strain ATCC 700922 / JCM 11081 / NRC-1) (Halobacterium halobium).